We begin with the raw amino-acid sequence, 359 residues long: Mannonate dehydratase (359 aa).

The protein belongs to the mannonate dehydratase family. Fe(2+) serves as cofactor. It depends on Mn(2+) as a cofactor.

It carries out the reaction D-mannonate = 2-dehydro-3-deoxy-D-gluconate + H2O. Its pathway is carbohydrate metabolism; pentose and glucuronate interconversion. Catalyzes the dehydration of D-mannonate. The chain is Mannonate dehydratase from Moorella thermoacetica (strain ATCC 39073 / JCM 9320).